Reading from the N-terminus, the 373-residue chain is tRNA-specific 2-thiouridylase MnmA (373 aa).

ATP is bound by residues 12 to 19 and Met38; that span reads GMSGGVDS. The interval 98 to 100 is interaction with target base in tRNA; the sequence is NPD. Cys103 (nucleophile) is an active-site residue. A disulfide bond links Cys103 and Cys200. An ATP-binding site is contributed by Gly127. The interval 150–152 is interaction with tRNA; that stretch reads KDQ. Catalysis depends on Cys200, which acts as the Cysteine persulfide intermediate. The segment at 312 to 313 is interaction with tRNA; sequence RY.

The protein belongs to the MnmA/TRMU family.

The protein resides in the cytoplasm. It catalyses the reaction S-sulfanyl-L-cysteinyl-[protein] + uridine(34) in tRNA + AH2 + ATP = 2-thiouridine(34) in tRNA + L-cysteinyl-[protein] + A + AMP + diphosphate + H(+). Its function is as follows. Catalyzes the 2-thiolation of uridine at the wobble position (U34) of tRNA, leading to the formation of s(2)U34. The sequence is that of tRNA-specific 2-thiouridylase MnmA from Streptococcus pyogenes serotype M1.